The chain runs to 469 residues: Neuraminidase (469 aa).

Over 1-12 (MNTNQRIITIGT) the chain is Intravirion. The segment at 11–33 (GTICLIVGIISLLLQIGNIILLW) is involved in apical transport and lipid raft association. A helical membrane pass occupies residues 13–33 (ICLIVGIISLLLQIGNIILLW). Topologically, residues 34 to 469 (MSHSIQTGEK…GADLPFTIDK (436 aa)) are virion surface. Residues 36-90 (HSIQTGEKSHPKVCNQSVITYENNTWVNQTYVNISNTNIAAGQGVTPIILAGNSS) are hypervariable stalk region. Asn-50, Asn-58, Asn-63, Asn-68, and Asn-88 each carry an N-linked (GlcNAc...) asparagine; by host glycan. The head of neuraminidase stretch occupies residues 91 to 469 (LCPISGWAIY…GADLPFTIDK (379 aa)). Intrachain disulfides connect Cys-92–Cys-417, Cys-124–Cys-129, Cys-184–Cys-231, Cys-233–Cys-238, Cys-279–Cys-292, Cys-281–Cys-290, Cys-318–Cys-335, and Cys-421–Cys-446. Arg-118 is a binding site for substrate. Asn-146 carries N-linked (GlcNAc...) asparagine; by host glycosylation. Asp-151 serves as the catalytic Proton donor/acceptor. Residue Arg-152 participates in substrate binding. N-linked (GlcNAc...) asparagine; by host glycosylation is present at Asn-235. 277-278 (EE) provides a ligand contact to substrate. Arg-293 is a substrate binding site. Positions 294, 324, and 344 each coordinate Ca(2+). Arg-368 contributes to the substrate binding site. Tyr-402 acts as the Nucleophile in catalysis.

Belongs to the glycosyl hydrolase 34 family. Homotetramer. Ca(2+) is required as a cofactor. Post-translationally, N-glycosylated.

The protein resides in the virion membrane. It is found in the host apical cell membrane. The catalysed reaction is Hydrolysis of alpha-(2-&gt;3)-, alpha-(2-&gt;6)-, alpha-(2-&gt;8)- glycosidic linkages of terminal sialic acid residues in oligosaccharides, glycoproteins, glycolipids, colominic acid and synthetic substrates.. Its activity is regulated as follows. Inhibited by the neuraminidase inhibitors zanamivir (Relenza) and oseltamivir (Tamiflu). These drugs interfere with the release of progeny virus from infected cells and are effective against all influenza strains. Resistance to neuraminidase inhibitors is quite rare. Functionally, catalyzes the removal of terminal sialic acid residues from viral and cellular glycoconjugates. Cleaves off the terminal sialic acids on the glycosylated HA during virus budding to facilitate virus release. Additionally helps virus spread through the circulation by further removing sialic acids from the cell surface. These cleavages prevent self-aggregation and ensure the efficient spread of the progeny virus from cell to cell. Otherwise, infection would be limited to one round of replication. Described as a receptor-destroying enzyme because it cleaves a terminal sialic acid from the cellular receptors. May facilitate viral invasion of the upper airways by cleaving the sialic acid moieties on the mucin of the airway epithelial cells. Likely to plays a role in the budding process through its association with lipid rafts during intracellular transport. May additionally display a raft-association independent effect on budding. Plays a role in the determination of host range restriction on replication and virulence. Sialidase activity in late endosome/lysosome traffic seems to enhance virus replication. This Influenza A virus (strain A/New Jersey/8/1976 H1N1) protein is Neuraminidase.